A 424-amino-acid chain; its full sequence is O-methyltransferase bfoD (424 aa).

D275 contacts S-adenosyl-L-methionine. The Proton acceptor role is filled by H326.

Belongs to the class I-like SAM-binding methyltransferase superfamily. Cation-independent O-methyltransferase family.

It functions in the pathway secondary metabolite biosynthesis. Functionally, cytochrome P450 monooxygenase; part of the gene cluster that mediates the biosynthesis of bifonsecin B, a dimeric gamma-naphthopyrone. The first step in the biosynthesis of bifonsecin B is the production of gamma-naphthopyrone precursor YWA1 by the non-reducing polyketide synthase albA, via condensation of one acetyl-CoA starter unit with 6 malonyl-CoA units. YWA1 is then methylated by bfoE at position C-6 to yield foncesin which is further methylated at position C-8 by bfoD to produce fonsecin B. A key enzyme in the biosynthetic pathway is the cytochrome P450 monooxygenase bfoB which catalyzes the oxidative dimerization of fonsecin B to bifonsecin B. Bfob also catalyzes the oxidative dimerization of rubrofusarin B into nigerone. The stereoselectivity of bfoB is influenced by the two natural monomeric substrates; homodimerization of fonsecin B yields a stereochemically pure biaryl, M-foncerine B, while rubrofusarin B yields a mixture of enantiomers M- and P-nigerone. This Aspergillus brasiliensis (strain CBS 101740 / IMI 381727 / IBT 21946) protein is O-methyltransferase bfoD.